A 97-amino-acid polypeptide reads, in one-letter code: Plasmid stability protein StbC (97 aa).

Functionally, involved in plasmid stability. This is Plasmid stability protein StbC (stbC) from Pseudomonas syringae pv. tomato (strain ATCC BAA-871 / DC3000).